The sequence spans 469 residues: Glutamate--tRNA ligase (469 aa).

Positions 9-19 match the 'HIGH' region motif; the sequence is PSPTGFLHVGG. A 'KMSKS' region motif is present at residues 236–240; the sequence is KLSKR. Lys239 contacts ATP.

Belongs to the class-I aminoacyl-tRNA synthetase family. Glutamate--tRNA ligase type 1 subfamily. In terms of assembly, monomer.

It is found in the cytoplasm. It carries out the reaction tRNA(Glu) + L-glutamate + ATP = L-glutamyl-tRNA(Glu) + AMP + diphosphate. Functionally, catalyzes the attachment of glutamate to tRNA(Glu) in a two-step reaction: glutamate is first activated by ATP to form Glu-AMP and then transferred to the acceptor end of tRNA(Glu). In Shewanella amazonensis (strain ATCC BAA-1098 / SB2B), this protein is Glutamate--tRNA ligase.